Here is a 153-residue protein sequence, read N- to C-terminus: Endoribonuclease YbeY (153 aa).

Zn(2+) contacts are provided by His-119, His-123, and His-129.

Belongs to the endoribonuclease YbeY family. The cofactor is Zn(2+).

It localises to the cytoplasm. Single strand-specific metallo-endoribonuclease involved in late-stage 70S ribosome quality control and in maturation of the 3' terminus of the 16S rRNA. This is Endoribonuclease YbeY from Desulforamulus reducens (strain ATCC BAA-1160 / DSM 100696 / MI-1) (Desulfotomaculum reducens).